Consider the following 635-residue polypeptide: Threonine--tRNA ligase (635 aa).

In terms of domain architecture, TGS spans 1 to 62 (MITITLPDGS…EHDAILRIIT (62 aa)). The tract at residues 244–535 (DHRKIGKAQD…LIEHYAGIWP (292 aa)) is catalytic. Residues Cys-335, His-386, and His-512 each coordinate Zn(2+).

This sequence belongs to the class-II aminoacyl-tRNA synthetase family. Homodimer. It depends on Zn(2+) as a cofactor.

The protein resides in the cytoplasm. It catalyses the reaction tRNA(Thr) + L-threonine + ATP = L-threonyl-tRNA(Thr) + AMP + diphosphate + H(+). In terms of biological role, catalyzes the attachment of threonine to tRNA(Thr) in a two-step reaction: L-threonine is first activated by ATP to form Thr-AMP and then transferred to the acceptor end of tRNA(Thr). Also edits incorrectly charged L-seryl-tRNA(Thr). In Xylella fastidiosa (strain M23), this protein is Threonine--tRNA ligase.